Reading from the N-terminus, the 205-residue chain is Small ribosomal subunit protein uS5 (205 aa).

An S5 DRBM domain is found at 49 to 112 (LEDEVLDIAM…TKAKMNLVKV (64 aa)).

It belongs to the universal ribosomal protein uS5 family. Part of the 30S ribosomal subunit. Contacts protein S4.

Functionally, with S4 and S12 plays an important role in translational accuracy. The protein is Small ribosomal subunit protein uS5 of Methanoregula boonei (strain DSM 21154 / JCM 14090 / 6A8).